Consider the following 277-residue polypeptide: Phosphatidylserine decarboxylase proenzyme (277 aa).

Residues Asp88, His144, and Ser242 each act as charge relay system; for autoendoproteolytic cleavage activity in the active site. Ser242 functions as the Schiff-base intermediate with substrate; via pyruvic acid; for decarboxylase activity in the catalytic mechanism. Ser242 carries the pyruvic acid (Ser); by autocatalysis modification.

The protein belongs to the phosphatidylserine decarboxylase family. PSD-B subfamily. Prokaryotic type I sub-subfamily. Heterodimer of a large membrane-associated beta subunit and a small pyruvoyl-containing alpha subunit. Pyruvate serves as cofactor. In terms of processing, is synthesized initially as an inactive proenzyme. Formation of the active enzyme involves a self-maturation process in which the active site pyruvoyl group is generated from an internal serine residue via an autocatalytic post-translational modification. Two non-identical subunits are generated from the proenzyme in this reaction, and the pyruvate is formed at the N-terminus of the alpha chain, which is derived from the carboxyl end of the proenzyme. The autoendoproteolytic cleavage occurs by a canonical serine protease mechanism, in which the side chain hydroxyl group of the serine supplies its oxygen atom to form the C-terminus of the beta chain, while the remainder of the serine residue undergoes an oxidative deamination to produce ammonia and the pyruvoyl prosthetic group on the alpha chain. During this reaction, the Ser that is part of the protease active site of the proenzyme becomes the pyruvoyl prosthetic group, which constitutes an essential element of the active site of the mature decarboxylase.

It is found in the cell membrane. The catalysed reaction is a 1,2-diacyl-sn-glycero-3-phospho-L-serine + H(+) = a 1,2-diacyl-sn-glycero-3-phosphoethanolamine + CO2. It functions in the pathway phospholipid metabolism; phosphatidylethanolamine biosynthesis; phosphatidylethanolamine from CDP-diacylglycerol: step 2/2. Its function is as follows. Catalyzes the formation of phosphatidylethanolamine (PtdEtn) from phosphatidylserine (PtdSer). The sequence is that of Phosphatidylserine decarboxylase proenzyme from Psychrobacter arcticus (strain DSM 17307 / VKM B-2377 / 273-4).